Reading from the N-terminus, the 485-residue chain is Probable high-affinity nitrate transporter 2.4 (485 aa).

12 helical membrane-spanning segments follow: residues 56 to 76 (WMSL…LPAM), 80 to 100 (LVLA…ATLV), 119 to 139 (GVAS…ASSP), 147 to 167 (FVAG…SRIF), 177 to 197 (AVAA…MPVA), 215 to 235 (VTYL…LAFP), 270 to 290 (AWLL…MENV), 305 to 327 (AAGA…GGVA), 341 to 361 (LWAL…VGRM), 377 to 397 (VACA…VPFV), 405 to 425 (VSGM…RLFF), and 435 to 455 (AISC…LIHF).

It belongs to the major facilitator superfamily. Nitrate/nitrite porter (TC 2.A.1.8) family. As to expression, expressed in the base of the lateral root primordia, root-shoot junction zone, leaves, ends of the husk and vascular tissue of the anthers.

It localises to the cell membrane. In terms of biological role, involved in nitrate transport. The polypeptide is Probable high-affinity nitrate transporter 2.4 (NRT2.4) (Oryza sativa subsp. japonica (Rice)).